A 360-amino-acid polypeptide reads, in one-letter code: Phospho-N-acetylmuramoyl-pentapeptide-transferase (360 aa).

Helical transmembrane passes span 26–46, 70–90, 97–117, 132–152, 168–188, 199–219, 236–256, 263–283, 288–308, and 338–358; these read TILG…AVIQ, GTPT…TLLW, YVWV…VDDY, AKFF…FSTA, VVLP…VGSS, GLAI…AYAT, AGEV…FLWF, VFMG…LAVV, LVLL…MLQV, and VIVR…AMLK.

This sequence belongs to the glycosyltransferase 4 family. MraY subfamily. It depends on Mg(2+) as a cofactor.

It is found in the cell inner membrane. The enzyme catalyses UDP-N-acetyl-alpha-D-muramoyl-L-alanyl-gamma-D-glutamyl-meso-2,6-diaminopimeloyl-D-alanyl-D-alanine + di-trans,octa-cis-undecaprenyl phosphate = di-trans,octa-cis-undecaprenyl diphospho-N-acetyl-alpha-D-muramoyl-L-alanyl-D-glutamyl-meso-2,6-diaminopimeloyl-D-alanyl-D-alanine + UMP. Its pathway is cell wall biogenesis; peptidoglycan biosynthesis. Functionally, catalyzes the initial step of the lipid cycle reactions in the biosynthesis of the cell wall peptidoglycan: transfers peptidoglycan precursor phospho-MurNAc-pentapeptide from UDP-MurNAc-pentapeptide onto the lipid carrier undecaprenyl phosphate, yielding undecaprenyl-pyrophosphoryl-MurNAc-pentapeptide, known as lipid I. This Alkalilimnicola ehrlichii (strain ATCC BAA-1101 / DSM 17681 / MLHE-1) protein is Phospho-N-acetylmuramoyl-pentapeptide-transferase.